Here is a 202-residue protein sequence, read N- to C-terminus: Imidazoleglycerol-phosphate dehydratase (202 aa).

Belongs to the imidazoleglycerol-phosphate dehydratase family.

It localises to the cytoplasm. The catalysed reaction is D-erythro-1-(imidazol-4-yl)glycerol 3-phosphate = 3-(imidazol-4-yl)-2-oxopropyl phosphate + H2O. The protein operates within amino-acid biosynthesis; L-histidine biosynthesis; L-histidine from 5-phospho-alpha-D-ribose 1-diphosphate: step 6/9. This Rhizobium meliloti (strain 1021) (Ensifer meliloti) protein is Imidazoleglycerol-phosphate dehydratase.